We begin with the raw amino-acid sequence, 131 residues long: Leptin receptor overlapping transcript-like 1 (131 aa).

4 helical membrane-spanning segments follow: residues L7–L27, Q32–A52, L69–A89, and A100–F120.

It belongs to the OB-RGRP/VPS55 family.

The protein resides in the membrane. Negatively regulates growth hormone (GH) receptor cell surface expression in liver. May play a role in liver resistance to GH during periods of reduced nutrient availability. This chain is Leptin receptor overlapping transcript-like 1 (LEPROTL1), found in Bos taurus (Bovine).